We begin with the raw amino-acid sequence, 203 residues long: RNA annealing protein YRA2 (203 aa).

Residue M1 is modified to N-acetylmethionine. Disordered stretches follow at residues 1–60 (MDKA…REEP) and 137–203 (QPQR…YMKG). Residues 11–20 (NSHTDSSSNH) show a composition bias toward polar residues. The segment covering 47-60 (SRSKDRLYREREEP) has biased composition (basic and acidic residues). In terms of domain architecture, RRM spans 64–138 (KRIRISKIPL…AKIEVEIYQP (75 aa)). Composition is skewed to basic residues over residues 139 to 153 (QRKHSRMNAHNRRKQ) and 163 to 180 (PGSHYRQRPNRVSKKNKG).

This sequence belongs to the YRA1 family. Associates with mRNPs. Interacts with YRA1.

The protein resides in the nucleus. Functionally, involved in export of poly(A) mRNAs from the nucleus. Recruited to the coding sequences as well as poly-A sites of active genes. The chain is RNA annealing protein YRA2 (YRA2) from Saccharomyces cerevisiae (strain Lalvin EC1118 / Prise de mousse) (Baker's yeast).